Here is a 463-residue protein sequence, read N- to C-terminus: Asparagine--tRNA ligase (463 aa).

Belongs to the class-II aminoacyl-tRNA synthetase family. In terms of assembly, homodimer.

It is found in the cytoplasm. It carries out the reaction tRNA(Asn) + L-asparagine + ATP = L-asparaginyl-tRNA(Asn) + AMP + diphosphate + H(+). The protein is Asparagine--tRNA ligase of Desulfitobacterium hafniense (strain Y51).